A 624-amino-acid polypeptide reads, in one-letter code: Altered inheritance of mitochondria protein 9, mitochondrial (624 aa).

Residues 1–34 (MLSRVARCSRTLNQVTRNGQSGLFSAVLRTSIRQ) constitute a mitochondrion transit peptide.

This sequence belongs to the AIM9 family.

The protein localises to the mitochondrion. The polypeptide is Altered inheritance of mitochondria protein 9, mitochondrial (AIM9) (Candida albicans (strain WO-1) (Yeast)).